An 899-amino-acid polypeptide reads, in one-letter code: MELVSFGVEKLWDRLSQEYDQFKGVEDQVTELKSNLNLLKSFLKDADAKKHISEMVRHCVEEIKDIVYDTEDIIETFILKEKVEMKRGIMKRIKRFASTIMDRRELASDIGGISKRISKVIQDMQSFGVQQIITDGSRSSHPLQERQREMRHTFSRDSENDFVGMEANVKKLVGYLVEKDDYQIVSLTGMGGLGKTTLARQVFNHDVVKDRFDGFAWVSVSQEFTRISVWQTILQNLTSKERKDEIQNMKEADLHDDLFRLLESSKTLIVLDDIWKEEDWDLIKPIFPPKKGWKVLLTSRTESIAMRGDTTYISFKPKCLSIPDSWTLFQSIAMPRKDTSEFKVDEEMENMGKKMIKHCGGLSLAVKVLGGLLAAKYTLHDWKRLSENIGSHIVERTSGNNSSIDHVLSVSFEELPNYLKHCFLYLAHFPEDHEIDVEKLHYYWAAEGISERRRYDGETIRDTGDSYIEELVRRNMVISERDVMTSRFETCRLHDMMREICLFKAKEENFLQIVSNHSPTSNPQTLGASRRFVLHNPTTLHVERYKNNPKLRSLVVVYDDIGNRRWMLSGSIFTRVKLLRVLDLVQAKFKGGKLPSDIGKLIHLRYLSLKDAKVSHLPSSLRNLVLLIYLDIRTDFTDIFVPNVFMGMRELRYLELPRFMHEKTKLELSNLEKLEALENFSTKSSSLEDLRGMVRLRTLVIILSEGTSLQTLSASVCGLRHLENFKIMENAGVNRMGEERMVLDFTYLKKLTLSIEMPRLPKIQHLPSHLTVLDLSYCCLEEDPMPILEKLLELKDLSLDYLSFSGRKMVCSAGGFPQLRKLALDEQEEWEEWIVEEGSMSRLHTLSIWSSTLKELPDGLRFIYSLKNLIMGKSWMERLSERGEEFYKVQNIPFIKFSS.

A coiled-coil region spans residues 13–50 (DRLSQEYDQFKGVEDQVTELKSNLNLLKSFLKDADAKK). The 313-residue stretch at 143–455 (LQERQREMRH…AEGISERRRY (313 aa)) folds into the NB-ARC domain. 189–196 (GMGGLGKT) provides a ligand contact to ATP.

This sequence belongs to the disease resistance NB-LRR family.

In terms of biological role, potential disease resistance protein. The chain is Probable disease resistance protein RXW24L (RXW24L) from Arabidopsis thaliana (Mouse-ear cress).